The following is a 704-amino-acid chain: MVHVNPIVKSFEYGQHTVTLETGVIARQADAAVLASMGDTTVLVTVVGKKFEEPGRDFFPLTVNYQEKTYAAGKIPGGFFKREGRPSESETLIARLIDRPIRPLFPNGFKNEVQVIITVVSVDPEINPDVISMIGTSAALAISGLPFNGPLGVARVGYTDGEYVLNPNVSQLVDSDLDLIVAGTQGAVLMVESEAAALPEEVMLGGVVYGHDQQQVVISAINELKAEASKPAWDWTAPVQDADLVAKIKDLAEAEMAAAYQIEVKQDRYTQVGVVKSAAKEALLAENPEADLREIDGLLGSLEKQVVRSRIIAGNPRIDGREPDMVRGLNVMAGVLPRTHGSALFTRGETQALVTCTLGTERDAQKVDSIMGEYTNRFMLHYNFPPYSVGETGFVGSPKRREIGHGKLAWRGINAVMPSAEEFPYSVRVVSEITESNGSSSMASVCGTSLALMDAGVPIKTSVAGIAMGLVKEGDDFVVLSDILGDEDHLGDMDFKVAGTRDGITALQMDIKIEGINKEIMQIALQQAYGARVHILNVMDQAIGEHRDDISDHAPRITTLKINPEKIRDVIGKGGATIRALTEETGTTIELEDDGTVKIASANGDATKEAIRRIEEITAEVEVGTIYNGKVVRIVDFGAFVTILPGKDGLVHISQIAEERVANVSDYLQVGQEVKVKVMEVDRQGRVRLSMKEAAPKAEAAPAE.

Residues aspartate 488 and aspartate 494 each contribute to the Mg(2+) site. Residues 555–614 form the KH domain; sequence PRITTLKINPEKIRDVIGKGGATIRALTEETGTTIELEDDGTVKIASANGDATKEAIRRI. In terms of domain architecture, S1 motif spans 624–692; it reads GTIYNGKVVR…RQGRVRLSMK (69 aa).

This sequence belongs to the polyribonucleotide nucleotidyltransferase family. In terms of assembly, component of the RNA degradosome, which is a multiprotein complex involved in RNA processing and mRNA degradation. Mg(2+) is required as a cofactor.

It localises to the cytoplasm. The catalysed reaction is RNA(n+1) + phosphate = RNA(n) + a ribonucleoside 5'-diphosphate. Functionally, involved in mRNA degradation. Catalyzes the phosphorolysis of single-stranded polyribonucleotides processively in the 3'- to 5'-direction. This Shewanella sediminis (strain HAW-EB3) protein is Polyribonucleotide nucleotidyltransferase.